The chain runs to 287 residues: Pyridoxal kinase PdxY (287 aa).

Residues S9 and 44 to 45 (MQ) contribute to the substrate site. ATP is bound by residues D111, A142, E147, and K180. Residue D221 participates in substrate binding.

The protein belongs to the pyridoxine kinase family. PdxY subfamily. In terms of assembly, homodimer. It depends on Mg(2+) as a cofactor.

The enzyme catalyses pyridoxal + ATP = pyridoxal 5'-phosphate + ADP + H(+). The protein operates within cofactor metabolism; pyridoxal 5'-phosphate salvage; pyridoxal 5'-phosphate from pyridoxal: step 1/1. Pyridoxal kinase involved in the salvage pathway of pyridoxal 5'-phosphate (PLP). Catalyzes the phosphorylation of pyridoxal to PLP. This is Pyridoxal kinase PdxY from Burkholderia pseudomallei (strain K96243).